Reading from the N-terminus, the 267-residue chain is DNA repair protein RecO (267 aa).

Belongs to the RecO family.

Its function is as follows. Involved in DNA repair and RecF pathway recombination. The protein is DNA repair protein RecO of Prochlorococcus marinus (strain MIT 9303).